A 305-amino-acid polypeptide reads, in one-letter code: Pseudouridine-5'-phosphate glycosidase (305 aa).

E28 functions as the Proton donor in the catalytic mechanism. 2 residues coordinate substrate: K89 and V109. D141 is a binding site for Mn(2+). 143 to 145 (SAD) contributes to the substrate binding site. Catalysis depends on K162, which acts as the Nucleophile.

It belongs to the pseudouridine-5'-phosphate glycosidase family. Homotrimer. It depends on Mn(2+) as a cofactor.

The enzyme catalyses D-ribose 5-phosphate + uracil = psi-UMP + H2O. Catalyzes the reversible cleavage of pseudouridine 5'-phosphate (PsiMP) to ribose 5-phosphate and uracil. Functions biologically in the cleavage direction, as part of a pseudouridine degradation pathway. This Dinoroseobacter shibae (strain DSM 16493 / NCIMB 14021 / DFL 12) protein is Pseudouridine-5'-phosphate glycosidase.